The sequence spans 330 residues: tRNA U34 carboxymethyltransferase (330 aa).

Residues lysine 91, tryptophan 105, lysine 110, glycine 130, 152-154 (DPS), 181-182 (IE), methionine 196, tyrosine 200, and arginine 315 each bind carboxy-S-adenosyl-L-methionine.

It belongs to the class I-like SAM-binding methyltransferase superfamily. CmoB family. In terms of assembly, homotetramer.

It carries out the reaction carboxy-S-adenosyl-L-methionine + 5-hydroxyuridine(34) in tRNA = 5-carboxymethoxyuridine(34) in tRNA + S-adenosyl-L-homocysteine + H(+). Functionally, catalyzes carboxymethyl transfer from carboxy-S-adenosyl-L-methionine (Cx-SAM) to 5-hydroxyuridine (ho5U) to form 5-carboxymethoxyuridine (cmo5U) at position 34 in tRNAs. The polypeptide is tRNA U34 carboxymethyltransferase (Shewanella woodyi (strain ATCC 51908 / MS32)).